The primary structure comprises 483 residues: ATP synthase subunit beta, chloroplastic (483 aa).

163–170 contacts ATP; sequence GGAGVGKT.

It belongs to the ATPase alpha/beta chains family. As to quaternary structure, F-type ATPases have 2 components, CF(1) - the catalytic core - and CF(0) - the membrane proton channel. CF(1) has five subunits: alpha(3), beta(3), gamma(1), delta(1), epsilon(1). CF(0) has four main subunits: a(1), b(1), b'(1) and c(9-12).

The protein resides in the plastid. It localises to the chloroplast thylakoid membrane. The catalysed reaction is ATP + H2O + 4 H(+)(in) = ADP + phosphate + 5 H(+)(out). Produces ATP from ADP in the presence of a proton gradient across the membrane. The catalytic sites are hosted primarily by the beta subunits. This is ATP synthase subunit beta, chloroplastic from Ostreococcus tauri.